The following is a 540-amino-acid chain: Protein dml-1 (540 aa).

The interval 517-540 is disordered; that stretch reads NELAEMADEYHEGWSSGSDDGDDD.

It belongs to the misato family.

Its subcellular location is the mitochondrion. Functionally, involved in the partitioning of the mitochondrial organelle and mitochondrial DNA (mtDNA) inheritance. This Neurospora crassa (strain ATCC 24698 / 74-OR23-1A / CBS 708.71 / DSM 1257 / FGSC 987) protein is Protein dml-1 (dml-1).